We begin with the raw amino-acid sequence, 406 residues long: Phosphopentomutase (406 aa).

6 residues coordinate Mn(2+): Asp10, Asp305, His310, Asp346, His347, and His358.

It belongs to the phosphopentomutase family. The cofactor is Mn(2+).

It localises to the cytoplasm. The enzyme catalyses 2-deoxy-alpha-D-ribose 1-phosphate = 2-deoxy-D-ribose 5-phosphate. The catalysed reaction is alpha-D-ribose 1-phosphate = D-ribose 5-phosphate. The protein operates within carbohydrate degradation; 2-deoxy-D-ribose 1-phosphate degradation; D-glyceraldehyde 3-phosphate and acetaldehyde from 2-deoxy-alpha-D-ribose 1-phosphate: step 1/2. Functionally, isomerase that catalyzes the conversion of deoxy-ribose 1-phosphate (dRib-1-P) and ribose 1-phosphate (Rib-1-P) to deoxy-ribose 5-phosphate (dRib-5-P) and ribose 5-phosphate (Rib-5-P), respectively. The polypeptide is Phosphopentomutase (Aliivibrio fischeri (strain MJ11) (Vibrio fischeri)).